The primary structure comprises 727 residues: DNA topoisomerase 3 (727 aa).

The Toprim domain maps to 3-136 (KTVVLAEKPS…LKRLWISSVT (134 aa)). Mg(2+)-binding residues include Glu9 and Asp105. Residues 153–592 (FENLYHSAVA…EMKEYAKQTI (440 aa)) enclose the Topo IA-type catalytic domain. The segment at 187-192 (SCGRVQ) is interaction with DNA. Tyr310 serves as the catalytic O-(5'-phospho-DNA)-tyrosine intermediate. Basic and acidic residues predominate over residues 685-711 (RRAKDKNSKASKRDVHSYMKKQNKDEP). The disordered stretch occupies residues 685–713 (RRAKDKNSKASKRDVHSYMKKQNKDEPIN).

It belongs to the type IA topoisomerase family. The cofactor is Mg(2+).

The catalysed reaction is ATP-independent breakage of single-stranded DNA, followed by passage and rejoining.. Functionally, releases the supercoiling and torsional tension of DNA, which is introduced during the DNA replication and transcription, by transiently cleaving and rejoining one strand of the DNA duplex. Introduces a single-strand break via transesterification at a target site in duplex DNA. The scissile phosphodiester is attacked by the catalytic tyrosine of the enzyme, resulting in the formation of a DNA-(5'-phosphotyrosyl)-enzyme intermediate and the expulsion of a 3'-OH DNA strand. The free DNA strand then undergoes passage around the unbroken strand, thus removing DNA supercoils. Finally, in the religation step, the DNA 3'-OH attacks the covalent intermediate to expel the active-site tyrosine and restore the DNA phosphodiester backbone. This Bacillus licheniformis (strain ATCC 14580 / DSM 13 / JCM 2505 / CCUG 7422 / NBRC 12200 / NCIMB 9375 / NCTC 10341 / NRRL NRS-1264 / Gibson 46) protein is DNA topoisomerase 3.